The primary structure comprises 86 residues: Large ribosomal subunit protein uL23 (86 aa).

This sequence belongs to the universal ribosomal protein uL23 family. Part of the 50S ribosomal subunit. Contacts protein L29.

Binds to 23S rRNA. One of the proteins that surrounds the polypeptide exit tunnel on the outside of the ribosome. The protein is Large ribosomal subunit protein uL23 of Methanococcus maripaludis (strain C7 / ATCC BAA-1331).